Reading from the N-terminus, the 320-residue chain is uncharacterized protein (320 aa).

Positions 1 to 40 (MDHPSTSSLPRKKVKAGVKKAGKKTGKKTTGKKKTTPSAI) are disordered. A compositionally biased stretch (basic residues) spans 10–35 (PRKKVKAGVKKAGKKTGKKTTGKKKT). Residues 51–71 (LLVLLAVLSYLAALSLGLYIM) traverse the membrane as a helical segment. 4 N-linked (GlcNAc...) asparagine glycosylation sites follow: Asn-92, Asn-122, Asn-154, and Asn-167. A run of 2 helical transmembrane segments spans residues 186 to 206 (PLVH…AMTG) and 216 to 236 (MLVT…VTVL). Asn-247 carries N-linked (GlcNAc...) asparagine glycosylation. A helical transmembrane segment spans residues 272–292 (VQGALVAIVAVFYLTMGVVFV).

The protein resides in the membrane. Its pathway is secondary metabolite biosynthesis; terpenoid biosynthesis. Functionally, part of the gene cluster that mediates the biosynthesis of an ophiobolin family sesterterpenoid. This is an uncharacterized protein from Aspergillus terreus.